The sequence spans 211 residues: Thiamine-phosphate synthase (211 aa).

Residues 44 to 48 and N75 contribute to the 4-amino-2-methyl-5-(diphosphooxymethyl)pyrimidine site; that span reads QYRNK. 2 residues coordinate Mg(2+): D76 and D95. 4-amino-2-methyl-5-(diphosphooxymethyl)pyrimidine is bound at residue S114. 2-[(2R,5Z)-2-carboxy-4-methylthiazol-5(2H)-ylidene]ethyl phosphate is bound at residue 140–142; sequence TKS. K143 serves as a coordination point for 4-amino-2-methyl-5-(diphosphooxymethyl)pyrimidine. G171 provides a ligand contact to 2-[(2R,5Z)-2-carboxy-4-methylthiazol-5(2H)-ylidene]ethyl phosphate.

This sequence belongs to the thiamine-phosphate synthase family. Mg(2+) is required as a cofactor.

The catalysed reaction is 2-[(2R,5Z)-2-carboxy-4-methylthiazol-5(2H)-ylidene]ethyl phosphate + 4-amino-2-methyl-5-(diphosphooxymethyl)pyrimidine + 2 H(+) = thiamine phosphate + CO2 + diphosphate. The enzyme catalyses 2-(2-carboxy-4-methylthiazol-5-yl)ethyl phosphate + 4-amino-2-methyl-5-(diphosphooxymethyl)pyrimidine + 2 H(+) = thiamine phosphate + CO2 + diphosphate. It carries out the reaction 4-methyl-5-(2-phosphooxyethyl)-thiazole + 4-amino-2-methyl-5-(diphosphooxymethyl)pyrimidine + H(+) = thiamine phosphate + diphosphate. It functions in the pathway cofactor biosynthesis; thiamine diphosphate biosynthesis; thiamine phosphate from 4-amino-2-methyl-5-diphosphomethylpyrimidine and 4-methyl-5-(2-phosphoethyl)-thiazole: step 1/1. Functionally, condenses 4-methyl-5-(beta-hydroxyethyl)thiazole monophosphate (THZ-P) and 2-methyl-4-amino-5-hydroxymethyl pyrimidine pyrophosphate (HMP-PP) to form thiamine monophosphate (TMP). This Koribacter versatilis (strain Ellin345) protein is Thiamine-phosphate synthase.